Reading from the N-terminus, the 156-residue chain is Snaclec subunit B (156 aa).

The N-terminal stretch at 1–23 (MGRSIFVNLGLLVVAFSLRGSEA) is a signal peptide. Disulfide bonds link Cys25–Cys36, Cys53–Cys144, and Cys119–Cys136. The region spanning 32–145 (YDKYCYKVFD…CKSTLPFTCK (114 aa)) is the C-type lectin domain.

The protein belongs to the snaclec family. As to quaternary structure, heterodimer of subunits A and B; disulfide-linked. In terms of tissue distribution, expressed by the venom gland.

It localises to the secreted. Functionally, interferes with one step of hemostasis (modulation of platelet aggregation, or coagulation cascade, for example). The sequence is that of Snaclec subunit B from Philodryas olfersii (Green snake).